The sequence spans 190 residues: MKASYFLASKYAQALLGTLEEKGEISRLDEYVEAFQRLKKALESSESLRDMVYSPLIPPKHIVSRMKDVSEFDDTIFVQFLEVLADKRRQNLIPFMSHILYQESLEREKVVEVRLVLPNEVSNTIINQVKQAIQNKTGRKIKLRTQFNEDLIGGLQLYIGDKFFDYSVKGFLQDIQSAYAPIGGGEIFES.

This sequence belongs to the ATPase delta chain family. As to quaternary structure, F-type ATPases have 2 components, F(1) - the catalytic core - and F(0) - the membrane proton channel. F(1) has five subunits: alpha(3), beta(3), gamma(1), delta(1), epsilon(1). F(0) has three main subunits: a(1), b(2) and c(10-14). The alpha and beta chains form an alternating ring which encloses part of the gamma chain. F(1) is attached to F(0) by a central stalk formed by the gamma and epsilon chains, while a peripheral stalk is formed by the delta and b chains.

The protein localises to the cell inner membrane. In terms of biological role, f(1)F(0) ATP synthase produces ATP from ADP in the presence of a proton or sodium gradient. F-type ATPases consist of two structural domains, F(1) containing the extramembraneous catalytic core and F(0) containing the membrane proton channel, linked together by a central stalk and a peripheral stalk. During catalysis, ATP synthesis in the catalytic domain of F(1) is coupled via a rotary mechanism of the central stalk subunits to proton translocation. Its function is as follows. This protein is part of the stalk that links CF(0) to CF(1). It either transmits conformational changes from CF(0) to CF(1) or is implicated in proton conduction. This is ATP synthase subunit delta from Petrotoga mobilis (strain DSM 10674 / SJ95).